Reading from the N-terminus, the 371-residue chain is uncharacterized protein (371 aa).

In terms of domain architecture, EH spans 43-148 (DESRVPKFYL…VQAFPTASNP (106 aa)). The tract at residues 179-205 (SMRKKKESDSKEVSAHNSPAKGAAHDL) is disordered.

This is an uncharacterized protein from Caenorhabditis elegans.